The primary structure comprises 1269 residues: Protein strawberry notch homolog 1 (1269 aa).

Positions 21–47 (NDLFDVDGGDAGLATPTPPSVQQQQPP) are disordered. At Lys113 the chain carries N6-acetyllysine. Ser126 and Ser178 each carry phosphoserine. The residue at position 377 (Lys377) is an N6-acetyllysine. Residues 652 to 725 (PSNNSSPRDS…SLITSQDAVE (74 aa)) form a disordered region. A phosphoserine mark is found at Ser656, Ser657, and Ser661. Over residues 679 to 693 (SGSESDVSDNEESDY) the composition is skewed to acidic residues. A phosphoserine mark is found at Ser700 and Ser701. Residues 719 to 746 (TSQDAVERAQQMKKDLLDKLEKLAEDLP) adopt a coiled-coil conformation. Position 1098 is an N6-acetyllysine (Lys1098). Phosphoserine is present on Ser1262.

It belongs to the SBNO family.

It is found in the nucleus. In terms of biological role, plays a crucial role in the regulation of neural stem cells (NSCs) proliferation. Enhances the phosphorylation of GSK3B through the PI3K-Akt signaling pathway, thereby upregulating the Wnt/beta-catenin signaling pathway and promoting the proliferation of NSCs. Improves ischemic stroke recovery while inhibiting neuroinflammation through small extracellular vesicles (sEVs)-mediated mechanism. Enhances the secretion of sEVs from NSCs, which in turn inhibit both the MAPK and NF-kappaB pathways in microglia. This inhibition suppresses the pro-inflammatory M1 polarization of microglia, promoting a shift towards the M2 anti-inflammatory phenotype, which is beneficial for reducing neuroinflammation. This Rattus norvegicus (Rat) protein is Protein strawberry notch homolog 1 (Sbno1).